The sequence spans 92 residues: Small ribosomal subunit protein bS20 (92 aa).

The segment at 1–23 (MANSPSAKKRAKQAEKRRSHNAS) is disordered. Residues 7–20 (AKKRAKQAEKRRSH) are compositionally biased toward basic residues.

The protein belongs to the bacterial ribosomal protein bS20 family.

In terms of biological role, binds directly to 16S ribosomal RNA. This chain is Small ribosomal subunit protein bS20, found in Pseudomonas fluorescens (strain ATCC BAA-477 / NRRL B-23932 / Pf-5).